The following is a 374-amino-acid chain: Glutamate 5-kinase (374 aa).

An ATP-binding site is contributed by lysine 16. Serine 56, aspartate 143, and asparagine 155 together coordinate substrate. Residue 175–176 coordinates ATP; sequence TD. One can recognise a PUA domain in the interval 282-360; the sequence is RGRVVLDAGA…SEIEAVLGYV (79 aa).

This sequence belongs to the glutamate 5-kinase family.

It is found in the cytoplasm. The enzyme catalyses L-glutamate + ATP = L-glutamyl 5-phosphate + ADP. It participates in amino-acid biosynthesis; L-proline biosynthesis; L-glutamate 5-semialdehyde from L-glutamate: step 1/2. Functionally, catalyzes the transfer of a phosphate group to glutamate to form L-glutamate 5-phosphate. This chain is Glutamate 5-kinase, found in Ralstonia nicotianae (strain ATCC BAA-1114 / GMI1000) (Ralstonia solanacearum).